Consider the following 388-residue polypeptide: Succinate--CoA ligase [ADP-forming] subunit beta (388 aa).

The ATP-grasp domain maps to Lys-9–Glu-244. ATP is bound by residues Lys-46, Gly-53–Gly-55, Glu-99, Ala-102, and Glu-107. Residues Asn-199 and Asp-213 each contribute to the Mg(2+) site. Residues Asn-264 and Gly-321–Met-323 contribute to the substrate site.

It belongs to the succinate/malate CoA ligase beta subunit family. As to quaternary structure, heterotetramer of two alpha and two beta subunits. Mg(2+) is required as a cofactor.

The enzyme catalyses succinate + ATP + CoA = succinyl-CoA + ADP + phosphate. The catalysed reaction is GTP + succinate + CoA = succinyl-CoA + GDP + phosphate. It participates in carbohydrate metabolism; tricarboxylic acid cycle; succinate from succinyl-CoA (ligase route): step 1/1. Its function is as follows. Succinyl-CoA synthetase functions in the citric acid cycle (TCA), coupling the hydrolysis of succinyl-CoA to the synthesis of either ATP or GTP and thus represents the only step of substrate-level phosphorylation in the TCA. The beta subunit provides nucleotide specificity of the enzyme and binds the substrate succinate, while the binding sites for coenzyme A and phosphate are found in the alpha subunit. The polypeptide is Succinate--CoA ligase [ADP-forming] subunit beta (Albidiferax ferrireducens (strain ATCC BAA-621 / DSM 15236 / T118) (Rhodoferax ferrireducens)).